A 216-amino-acid polypeptide reads, in one-letter code: MOB kinase activator 3C (216 aa).

Zn(2+)-binding residues include cysteine 82, cysteine 87, histidine 164, and histidine 169.

Belongs to the MOB1/phocein family.

May regulate the activity of kinases. This Homo sapiens (Human) protein is MOB kinase activator 3C (MOB3C).